Consider the following 553-residue polypeptide: Mucolipin-3 (553 aa).

The Cytoplasmic portion of the chain corresponds to 1–62 (MANPEVLVSS…FWARGRKPWK (62 aa)). An interaction with phosphoinositides region spans residues 52-62 (KFWARGRKPWK). The chain crosses the membrane as a helical span at residues 63–83 (LAIQILKIAMVTIQLVLFGLS). Residues 84 to 283 (NQMVVAFKEE…VSGSIQKNTH (200 aa)) lie on the Extracellular side of the membrane. An extracellular/lumenal pore loop region spans residues 104–118 (KGYMDRMDDTYAVYT). N-linked (GlcNAc...) asparagine glycosylation is present at asparagine 138. Residues cysteine 159 and cysteine 185 are joined by a disulfide bond. Asparagine 205 is a glycosylation site (N-linked (GlcNAc...) asparagine). A disulfide bridge links cysteine 238 with cysteine 269. Residues 284 to 304 (YMMIFDAFVILTCLASLVLCA) form a helical membrane-spanning segment. Over 305-341 (RSVIRGLQLQQEFVNFFLLHYKKEVSASDQMEFINGW) the chain is Cytoplasmic. A helical membrane pass occupies residues 342-362 (YIMIIISDILTIVGSVLKMEI). Residues 363 to 371 (QAKSLTSYD) are Extracellular-facing. Residues 372–392 (VCSILLGTSTMLVWLGVIRYL) traverse the membrane as a helical segment. Residues 393–414 (GFFAKYNLLILTLQAALPNVMR) lie on the Cytoplasmic side of the membrane. The chain crosses the membrane as a helical span at residues 415-435 (FCCCAAMIYLGYCFCGWIVLG). Residues 436-443 (PYHEKFRS) are Extracellular-facing. An intramembrane region (pore-forming) is located at residues 444–464 (LNRVSECLFSLINGDDMFSTF). Residues 456-459 (NGDD) carry the Selectivity filter motif. Residues 465-475 (AKMQQKSYLVW) are Extracellular-facing. The helical transmembrane segment at 476–497 (LFSRVYLYSFISLFIYMILSLF) threads the bilayer. The Cytoplasmic portion of the chain corresponds to 498 to 553 (IALITDTYETIKHYQQDGFPETELRKFIAECKDLPNSGKYRLEDDPPGSLLCCCKK).

Belongs to the transient receptor (TC 1.A.4) family. Polycystin subfamily. MCOLN3 sub-subfamily. As to quaternary structure, homotetramer. Can heterooligomerize with MCOLN1; heteromeric assemblies have different channel properties as compared to the respective homooligomers and may be tissue-specific. May heterooligomerize with TRPV5 to form a functional distinct ion channel. Interacts with GABARAPL2. Post-translationally, N-glycosylated. As to expression, expressed in the cochlea; particularly in the inner and outer hair cells (at protein level).

It localises to the early endosome membrane. The protein localises to the late endosome membrane. The protein resides in the cytoplasmic vesicle. Its subcellular location is the autophagosome membrane. It is found in the cell projection. It localises to the stereocilium membrane. It carries out the reaction Ca(2+)(in) = Ca(2+)(out). The catalysed reaction is Mg(2+)(in) = Mg(2+)(out). The enzyme catalyses K(+)(in) = K(+)(out). It catalyses the reaction Na(+)(in) = Na(+)(out). With respect to regulation, channel activity is activated by PtdIns(3,5)P2 (phosphatidylinositol 3,5-bisphosphate). Inhibited by lumenal H(+) and Na(+). The channel pore shows dynamic behavior and undergoes spontaneous, Ca(2+)-dependent modulation when conducting Ca(2+). Nonselective cation channel probably playing a role in the regulation of membrane trafficking events. Acts as a Ca(2+)-permeable cation channel with inwardly rectifying activity. Mediates release of Ca(2+) from endosomes to the cytoplasm, contributes to endosomal acidification and is involved in the regulation of membrane trafficking and fusion in the endosomal pathway. Also permeable to Mg(2+), Na(+) and K(+). Does not seem to act as mechanosensory transduction channel in inner ear sensory hair cells. Proposed to play a critical role at the cochlear stereocilia ankle-link region during hair-bundle growth. Involved in the regulation of autophagy. Through association with GABARAPL2 may be involved in autophagosome formation possibly providing Ca(2+) for the fusion process. Through a possible and probably tissue-specific heteromerization with MCOLN1 may be at least in part involved in many lysosome-dependent cellular events. Possible heteromeric ion channel assemblies with TRPV5 show pharmacological similarity with TRPML3. The polypeptide is Mucolipin-3 (Mcoln3) (Mus musculus (Mouse)).